The following is a 146-amino-acid chain: LLNQKTAKYIPVHYVLSNYPHYEPSYYPHKPAVPVNNQYMPYPYYAKPVAVRPHVQIPQWQVLPNTYTPTVVRHPHLPASFIVIPPKKIQDKTGNPTINTIATAEPTLTPTTEPIVNTVVTTEASSEFTITSTPETTTVPVTSTMV.

O-linked (GalNAc...) threonine glycosylation is found at Thr-97, Thr-107, Thr-112, and Thr-118. Thr-121 bears the Phosphothreonine mark. Position 125 is a phosphoserine; alternate (Ser-125). O-linked (GalNAc...) serine; alternate glycosylation is present at Ser-125. An O-linked (GalNAc...) threonine glycan is attached at Thr-142. The residue at position 143 (Ser-143) is a Phosphoserine.

The protein belongs to the kappa-casein family. As to expression, mammary gland specific. Secreted in milk.

The protein resides in the secreted. In terms of biological role, kappa-casein stabilizes micelle formation, preventing casein precipitation in milk. This Panthera uncia (Snow leopard) protein is Kappa-casein (CSN3).